A 350-amino-acid polypeptide reads, in one-letter code: Induced myeloid leukemia cell differentiation protein Mcl-1 homolog (350 aa).

K5 participates in a covalent cross-link: Glycyl lysine isopeptide (Lys-Gly) (interchain with G-Cter in ubiquitin). The interval 23–95 is disordered; the sequence is AGSGGASSSG…GPNVSATPPR (73 aa). Residues 31 to 41 are compositionally biased toward low complexity; the sequence is SGGRLLASGRE. Residues 50-61 show a composition bias toward gly residues; the sequence is GGEAGAVIGGSA. The segment at 104 to 175 is PEST-like; the sequence is RASPPEEMEG…PAEEEEDELY (72 aa). S121 carries the phosphoserine modification. K136 is covalently cross-linked (Glycyl lysine isopeptide (Lys-Gly) (interchain with G-Cter in ubiquitin)). Residues 150–169 form a disordered region; sequence ASSGPGMDGSLPSTPPPAEE. S159 carries the post-translational modification Phosphoserine; by GSK3-alpha and GSK3-beta. S162 bears the Phosphoserine mark. Residue T163 is modified to Phosphothreonine. Residues K194 and K197 each participate in a glycyl lysine isopeptide (Lys-Gly) (interchain with G-Cter in ubiquitin) cross-link. The BH3 signature appears at 209-223; that stretch reads ALETLQRVGDGVQRN. Residues 252–272 carry the BH1 motif; the sequence is HVFSDGVTNWGRIVTLISFGA. Residues 304–319 carry the BH2 motif; the sequence is DWLVKQRGWDGFVEFF. Residues 327–349 traverse the membrane as a helical segment; it reads GIRNVLLAFAGVAGVGAGLAYLI.

This sequence belongs to the Bcl-2 family. In terms of assembly, interacts with HIF3A (via C-terminus domain). Interacts with BOK, BIK, BAX, BAK1, and TPT1. Interacts with unphosphorylated BAD. Interacts with BMF, BBC3 and PMAIP1. Interacts with BOP. Interacts with BCL2L11; may sequester BCL2L11 to prevent its pro-apoptotic activity. Interacts with GIMAP5 and HSPA8/HSC70; the interaction between HSPA8 and MCL1 is impaired in the absence of GIMAP5. In terms of processing, cleaved by CASP3 during apoptosis, yielding a pro-apoptotic C-terminal fragment. Rapidly degraded in the absence of phosphorylation in the PEST region. Post-translationally, phosphorylated on Ser-159, by GSK3, in response to IL3/interleukin-3 withdrawal. Phosphorylation at Ser-159 induces ubiquitination and proteasomal degradation, abrogating the anti-apoptotic activity. Treatment with taxol or okadaic acid induces phosphorylation on additional sites. In terms of processing, ubiquitinated. Ubiquitination is induced by phosphorylation at Ser-159. Deubiquitinated by USP20; leading to increased stability. In terms of tissue distribution, detected in peripheral blood mononuclear cells and bone marrow.

The protein resides in the membrane. Its subcellular location is the cytoplasm. It localises to the mitochondrion. The protein localises to the nucleus. It is found in the nucleoplasm. In terms of biological role, involved in the regulation of apoptosis versus cell survival, and in the maintenance of viability but not of proliferation. Mediates its effects by interactions with a number of other regulators of apoptosis. The polypeptide is Induced myeloid leukemia cell differentiation protein Mcl-1 homolog (MCL1) (Canis lupus familiaris (Dog)).